Consider the following 335-residue polypeptide: tRNA-splicing endonuclease (335 aa).

Residues Tyr269, His280, and Lys311 contribute to the active site.

Belongs to the tRNA-intron endonuclease family. Archaeal long subfamily. In terms of assembly, homodimer.

It catalyses the reaction pretRNA = a 3'-half-tRNA molecule with a 5'-OH end + a 5'-half-tRNA molecule with a 2',3'-cyclic phosphate end + an intron with a 2',3'-cyclic phosphate and a 5'-hydroxyl terminus.. In terms of biological role, endonuclease that removes tRNA introns. Cleaves pre-tRNA at the 5'- and 3'-splice sites to release the intron. The products are an intron and two tRNA half-molecules bearing 2',3' cyclic phosphate and 5'-OH termini. Recognizes a pseudosymmetric substrate in which 2 bulged loops of 3 bases are separated by a stem of 4 bp. The polypeptide is tRNA-splicing endonuclease (Haloarcula marismortui (strain ATCC 43049 / DSM 3752 / JCM 8966 / VKM B-1809) (Halobacterium marismortui)).